The sequence spans 210 residues: Na(+)-translocating NADH-quinone reductase subunit D (210 aa).

The next 6 helical transmembrane spans lie at 14–34 (PIVNNNPIALQVLGVCSALAV), 42–62 (LVMALALTAVTAFSNLFISMI), 72–92 (IIVQMTIIASLVIVVDQLLQA), 103–123 (VFVGLIITNCIVMGRAEAYAM), 131–151 (FMDGIGNGLGYGAILLAVGFV), and 178–198 (NGLLLLPPSAFFLIGVLIWII).

The protein belongs to the NqrDE/RnfAE family. Composed of six subunits; NqrA, NqrB, NqrC, NqrD, NqrE and NqrF.

The protein localises to the cell inner membrane. The catalysed reaction is a ubiquinone + n Na(+)(in) + NADH + H(+) = a ubiquinol + n Na(+)(out) + NAD(+). In terms of biological role, NQR complex catalyzes the reduction of ubiquinone-1 to ubiquinol by two successive reactions, coupled with the transport of Na(+) ions from the cytoplasm to the periplasm. NqrA to NqrE are probably involved in the second step, the conversion of ubisemiquinone to ubiquinol. The chain is Na(+)-translocating NADH-quinone reductase subunit D from Shewanella baltica (strain OS223).